The chain runs to 130 residues: Large ribosomal subunit protein eL32 (130 aa).

The protein belongs to the eukaryotic ribosomal protein eL32 family.

The protein is Large ribosomal subunit protein eL32 (rpl32e) of Pyrococcus horikoshii (strain ATCC 700860 / DSM 12428 / JCM 9974 / NBRC 100139 / OT-3).